We begin with the raw amino-acid sequence, 355 residues long: IgG receptor FcRn large subunit p51 (355 aa).

Residues 1 to 24 (MRVPRSQPWGLALLLLLLPGTLRA) form the signal peptide. The segment at 25–111 (AESHRSLLYH…ALKVFGDRDS (87 aa)) is alpha-1. Over 25-300 (AESHRSLLYH…LESPAKSSVP (276 aa)) the chain is Extracellular. The tract at residues 112–201 (YTLQGLLGCE…ERGRGNLEWK (90 aa)) is alpha-2. Asn126 is a glycosylation site (N-linked (GlcNAc...) asparagine). The interval 202–291 (EPPSMRLKAR…GPAQPLTVEL (90 aa)) is alpha-3. The region spanning 203-292 (PPSMRLKARP…PAQPLTVELE (90 aa)) is the Ig-like C1-type domain. An intrachain disulfide couples Cys222 to Cys276. The segment at 293-298 (SPAKSS) is connecting peptide. A helical transmembrane segment spans residues 301-321 (VIGISIGFLLLMTVAAGGALL). The Cytoplasmic portion of the chain corresponds to 322 to 355 (WRRRKGLPAPWIAFRGDDIGALLPTPGLSKDAES).

This sequence belongs to the immunoglobulin superfamily. FcRn complex consists of two subunits: p51, and p14 which is equivalent to beta-2-microglobulin. It forms an MHC class I-like heterodimer. Interacts with albumin/ALB; this interaction regulates ALB homeostasis. As to expression, expressed in liver and mammary gland of non-lactating animals. Expressed in hepatocytes and in epithelial cells of portal bile ductuli. Not expressed in the brances of portal veins or hepatic arteries. Expressed in the epithelial cells of the acini and ducti in the mammary gland with expression emphasized at the apical side. Not expressed in blood vessels of mammary gland.

It localises to the cell membrane. The protein localises to the endosome membrane. Its function is as follows. Cell surface receptor that transfers passive humoral immunity from the mother to the newborn. Binds to the Fc region of monomeric immunoglobulin gamma and mediates its selective uptake from milk. IgG in the milk is bound at the apical surface of the intestinal epithelium. The resultant FcRn-IgG complexes are transcytosed across the intestinal epithelium and IgG is released from FcRn into blood or tissue fluids. Throughout life, contributes to effective humoral immunity by recycling IgG and extending its half-life in the circulation. Mechanistically, monomeric IgG binding to FcRn in acidic endosomes of endothelial and hematopoietic cells recycles IgG to the cell surface where it is released into the circulation. In addition of IgG, regulates homeostasis of the other most abundant circulating protein albumin/ALB. This chain is IgG receptor FcRn large subunit p51, found in Camelus dromedarius (Dromedary).